The following is a 275-amino-acid chain: tRNA (guanine-N(1)-)-methyltransferase (275 aa).

Residues Gly-124 and 149-154 (IGDYVL) each bind S-adenosyl-L-methionine.

This sequence belongs to the RNA methyltransferase TrmD family. Homodimer.

It is found in the cytoplasm. It carries out the reaction guanosine(37) in tRNA + S-adenosyl-L-methionine = N(1)-methylguanosine(37) in tRNA + S-adenosyl-L-homocysteine + H(+). Its function is as follows. Specifically methylates guanosine-37 in various tRNAs. The chain is tRNA (guanine-N(1)-)-methyltransferase from Bifidobacterium animalis subsp. lactis (strain AD011).